A 311-amino-acid chain; its full sequence is Aspartate carbamoyltransferase catalytic subunit (311 aa).

Residues R55 and T56 each coordinate carbamoyl phosphate. K85 contacts L-aspartate. Carbamoyl phosphate is bound by residues R106, H135, and Q138. The L-aspartate site is built by R168 and R230. Carbamoyl phosphate contacts are provided by L268 and P269.

Belongs to the aspartate/ornithine carbamoyltransferase superfamily. ATCase family. Heterododecamer (2C3:3R2) of six catalytic PyrB chains organized as two trimers (C3), and six regulatory PyrI chains organized as three dimers (R2).

The enzyme catalyses carbamoyl phosphate + L-aspartate = N-carbamoyl-L-aspartate + phosphate + H(+). It functions in the pathway pyrimidine metabolism; UMP biosynthesis via de novo pathway; (S)-dihydroorotate from bicarbonate: step 2/3. Catalyzes the condensation of carbamoyl phosphate and aspartate to form carbamoyl aspartate and inorganic phosphate, the committed step in the de novo pyrimidine nucleotide biosynthesis pathway. In Escherichia coli (strain 55989 / EAEC), this protein is Aspartate carbamoyltransferase catalytic subunit.